Consider the following 187-residue polypeptide: Elongation factor P (187 aa).

This sequence belongs to the elongation factor P family.

The protein resides in the cytoplasm. It functions in the pathway protein biosynthesis; polypeptide chain elongation. Its function is as follows. Involved in peptide bond synthesis. Stimulates efficient translation and peptide-bond synthesis on native or reconstituted 70S ribosomes in vitro. Probably functions indirectly by altering the affinity of the ribosome for aminoacyl-tRNA, thus increasing their reactivity as acceptors for peptidyl transferase. This Corynebacterium diphtheriae (strain ATCC 700971 / NCTC 13129 / Biotype gravis) protein is Elongation factor P.